Here is a 219-residue protein sequence, read N- to C-terminus: Inner membrane protein YghB (219 aa).

The Cytoplasmic segment spans residues 1–17; it reads MAVIQDIIAALWQHDFA. The chain crosses the membrane as a helical span at residues 18-38; sequence ALANPHVVSVVYFVMFATLFL. At 39-67 the chain is on the periplasmic side; that stretch reads ENGLLPASFLPGDSLLLLAGALIAQDVMH. A helical membrane pass occupies residues 68 to 88; that stretch reads FLPTIGILTAAASLGCWLSYI. Residues 89 to 160 lie on the Cytoplasmic side of the membrane; the sequence is QGRWLGNTRT…RRFQFFNWLS (72 aa). The helical transmembrane segment at 161–181 threads the bilayer; sequence GLLWVTVVTSFGYALSMIPFV. The Periplasmic portion of the chain corresponds to 182-191; that stretch reads KRHEDQVMTF. The chain crosses the membrane as a helical span at residues 192–212; sequence LMILPVALLVAGLLGTLVVVI. Topologically, residues 213 to 219 are cytoplasmic; that stretch reads KKKYCNA.

The protein belongs to the DedA family.

It localises to the cell inner membrane. This chain is Inner membrane protein YghB (yghB), found in Salmonella typhimurium (strain LT2 / SGSC1412 / ATCC 700720).